The primary structure comprises 701 residues: Glycine--tRNA ligase beta subunit (701 aa).

This sequence belongs to the class-II aminoacyl-tRNA synthetase family. Tetramer of two alpha and two beta subunits.

The protein resides in the cytoplasm. The enzyme catalyses tRNA(Gly) + glycine + ATP = glycyl-tRNA(Gly) + AMP + diphosphate. The protein is Glycine--tRNA ligase beta subunit of Helicobacter pylori (strain G27).